Consider the following 488-residue polypeptide: ATP-dependent RNA helicase dbp3 (488 aa).

The segment covering 1–29 (MAKREHQDQTGDSRPSKKSKGTKDTKKNT) has biased composition (basic and acidic residues). Residues 1–42 (MAKREHQDQTGDSRPSKKSKGTKDTKKNTEVSPPYFQSPALD) form a disordered region. Positions 92-100 (GFASPTAIQ) match the Q motif motif. Positions 104-279 (WPLLFAGRDV…STFMTSPVTV (176 aa)) constitute a Helicase ATP-binding domain. An ATP-binding site is contributed by 117-124 (AETGSGKT). The DEAD box signature appears at 226 to 229 (DEAD). The region spanning 306 to 457 (EKEQRLVQIL…EVPEALLKFG (152 aa)) is the Helicase C-terminal domain.

This sequence belongs to the DEAD box helicase family. DDX5/DBP2 subfamily.

It is found in the nucleus. The protein localises to the nucleolus. The enzyme catalyses ATP + H2O = ADP + phosphate + H(+). In terms of biological role, ATP-dependent RNA helicase required for 60S ribosomal subunit synthesis. Involved in efficient pre-rRNA processing, predominantly at site A3, which is necessary for the normal formation of 25S and 5.8S rRNAs. The sequence is that of ATP-dependent RNA helicase dbp3 (dbp3) from Emericella nidulans (strain FGSC A4 / ATCC 38163 / CBS 112.46 / NRRL 194 / M139) (Aspergillus nidulans).